Reading from the N-terminus, the 940-residue chain is MAFNKLESSNNQEIISEEVGILKELLDDATRGIAGEQGLTTIQHLVELYDEGDYEALTQAISEMTNDDMVVASRYFSLLPLLINISEDVDLAYEVNRKNNIDESYLGKLSETFDVVAESDNARDILENVNVVPVLTAHPTQVQRKTMLELTNHIHELLRKHRDVKDGLINKDKWYADLRRYVEIMMKTDIIREKKLKVKNEITNVMEYYNSSLIKAITKLSHEFKRLAVEKGIELDNPTPITMGMWIGGDRDGNPFVTAETLKLSATLQSEVILNYYIEKVDNLYRSFSLSSRLTEVSETVAEMAKLSPDTSVYRENEPYRRAFSYIQSKLIQTLLFFKAGNFSNERAAKRLSENVRLGSVSTGEVVADFVHDRLSQSLQAVSQQTTEFYETAEAFHDDLLAIKNSLLENDDSVLISGDFEELLQAVEVFGFYLATIDMRQDSSVHEACVAELLKSANIVDNYSELTEVEKVAVLLKELQEDPRTLSSTNVSKSETLEKELAIFRTARLLKDYLGEEVIKQHIISHTESVSDMFELAILLKEVGLVDTERARVQIVPLFETIEDLENSNEIMKQYLGYDIVKRWIKNSNNYQEIMLGYSDSNKDGGYLSSGWTLYKAQNELTKIGEERGIKITFFHGRGGTVGRGGGPSYDAITSQPFGTIKDRIRLTEQGEVIGNKYGNKDAAYYNLEMLVSATLDRMVTRQITDPDELVDFREIMDSIVQDSNGIYRDLVFGNEHFYDYFFEASPIKEVSSLNIGSRPAARKTITDISGLRAIPWVFSWSQNRIMLPGWYGVGSAFNHYIEAEEGNLEKLQHMFETWPFFRSLLSNVDMVLSKSDMNIAFHYAQLAESEEVRSVFNIILDEWQLTKNVILAIEKHDDFLEESPSLKASLGFRLPYFNVLNYIQIELIKRLRNNNLTDDEISLIHITINGIATGLRNSG.

Active-site residues include His-138 and Lys-603.

It belongs to the PEPCase type 1 family. Mg(2+) serves as cofactor.

It catalyses the reaction oxaloacetate + phosphate = phosphoenolpyruvate + hydrogencarbonate. Its function is as follows. Forms oxaloacetate, a four-carbon dicarboxylic acid source for the tricarboxylic acid cycle. The sequence is that of Phosphoenolpyruvate carboxylase from Streptococcus thermophilus (strain ATCC BAA-491 / LMD-9).